Here is a 287-residue protein sequence, read N- to C-terminus: Probable aquaporin PIP1-4 (287 aa).

M1 is subject to N-acetylmethionine. The disordered stretch occupies residues 1 to 36; the sequence is MEGKEEDVRVGANKFPERQPIGTSAQSTDKDYKEPP. Topologically, residues 1 to 55 are cytoplasmic; the sequence is MEGKEEDVRVGANKFPERQPIGTSAQSTDKDYKEPPPAPLFEPGELSSWSFYRAG. A helical membrane pass occupies residues 56 to 76; that stretch reads IAEFIATFLFLYITVLTVMGV. Topologically, residues 77-92 are extracellular; it reads KRAPNMCASVGIQGIA. The helical transmembrane segment at 93–113 threads the bilayer; the sequence is WAFGGMIFALVYCTAGISGGH. Topologically, residues 114-133 are cytoplasmic; the sequence is INPAVTFGLFLARKLSLTRA. The NPA 1 motif lies at 115–117; that stretch reads NPA. The chain crosses the membrane as a helical span at residues 134–154; that stretch reads VFYMIMQCLGAICGAGVVKGF. Topologically, residues 155–175 are extracellular; the sequence is QPTPYQTLGGGANTVAHGYTK. Residues 176–196 form a helical membrane-spanning segment; sequence GSGLGAEIIGTFVLVYTVFSA. Over 197 to 209 the chain is Cytoplasmic; that stretch reads TDAKRSARDSHVP. Residues 210-230 form a helical membrane-spanning segment; that stretch reads ILAPLPIGFAVFLVHLATIPI. Topologically, residues 231–257 are extracellular; that stretch reads TGTGINPARSLGAAIIYNKDHSWDDHW. The NPA 2 signature appears at 236-238; sequence NPA. The helical transmembrane segment at 258–278 threads the bilayer; it reads IFWVGPFIGAALAALYHQIVI. Residues 279–287 lie on the Cytoplasmic side of the membrane; the sequence is RAIPFKSKS. S285 is modified (phosphoserine).

The protein belongs to the MIP/aquaporin (TC 1.A.8) family. PIP (TC 1.A.8.11) subfamily. Predominantly expressed in roots and green siliques. Also expressed above ground and in flower buds.

Its subcellular location is the cell membrane. Functionally, aquaporins facilitate the transport of water and small neutral solutes across cell membranes. The sequence is that of Probable aquaporin PIP1-4 (PIP1.4) from Arabidopsis thaliana (Mouse-ear cress).